Here is a 151-residue protein sequence, read N- to C-terminus: Small ribosomal subunit protein uS15 (151 aa).

Residues 1 to 20 (MARLHSGKRGSSGSTRPLRT) are disordered.

It belongs to the universal ribosomal protein uS15 family. In terms of assembly, part of the 30S ribosomal subunit.

The sequence is that of Small ribosomal subunit protein uS15 from Methanococcus maripaludis (strain C5 / ATCC BAA-1333).